A 486-amino-acid chain; its full sequence is N-succinylglutamate 5-semialdehyde dehydrogenase (486 aa).

220–225 (GSSRTG) lines the NAD(+) pocket. Active-site residues include E243 and C277.

Belongs to the aldehyde dehydrogenase family. AstD subfamily.

It catalyses the reaction N-succinyl-L-glutamate 5-semialdehyde + NAD(+) + H2O = N-succinyl-L-glutamate + NADH + 2 H(+). Its pathway is amino-acid degradation; L-arginine degradation via AST pathway; L-glutamate and succinate from L-arginine: step 4/5. In terms of biological role, catalyzes the NAD-dependent reduction of succinylglutamate semialdehyde into succinylglutamate. This chain is N-succinylglutamate 5-semialdehyde dehydrogenase, found in Shewanella sp. (strain W3-18-1).